The chain runs to 1125 residues: Transient receptor potential cation channel subfamily A member 1 (1125 aa).

The Cytoplasmic portion of the chain corresponds to 1 to 721; sequence MKRGLRRILL…KWCAYGFRAH (721 aa). ANK repeat units lie at residues 63–94, 98–127, 131–161, 165–194, 198–227, 239–268, 272–301, 309–338, and 342–371; these read ENLC…VLNI, YGNT…NPNL, NMMS…NINL, NGNT…KLCK, WGDY…KNGY, KKAS…HIDM, AKCM…GSSD, NQET…DINS, and EGRS…KVDI. 5 cysteine pairs are disulfide-bonded: Cys-193/Cys-666, Cys-463/Cys-666, Cys-609/Cys-622, Cys-622/Cys-666, and Cys-634/Cys-859. Pro-395 carries the post-translational modification 4-hydroxyproline; transient. ANK repeat units follow at residues 413-442, 446-475, 482-511, 514-543, and 548-577; these read DGCT…SIHS, DKKS…DTRL, HGMT…LFLS, NGWT…KCTD, and EGNT…DILL. (E)-cinnamaldehyde contacts are provided by Cys-415 and Cys-422. Residue Cys-622 coordinates (E)-cinnamaldehyde. Residue Cys-634 is modified to Cysteine sulfenic acid (-SOH); transient; in hyperoxia. (E)-cinnamaldehyde is bound by residues Cys-642, Cys-666, and Lys-712. The helical transmembrane segment at 722 to 742 threads the bilayer; the sequence is MMNLGSYCLGLIPMTLLVVKI. The Extracellular segment spans residues 743-767; sequence QPGMAFNSTGIINGTSSTHEERIDT. 2 N-linked (GlcNAc...) asparagine glycosylation sites follow: Asn-749 and Asn-755. The helical transmembrane segment at 768 to 788 threads the bilayer; the sequence is LNSFPIKICMILVFLSSIFGY. The Cytoplasmic portion of the chain corresponds to 789-806; it reads CKEVIQIFQQKRNYFLDY. Residues Glu-791, Gln-794, Asn-808, and Glu-811 each coordinate Ca(2+). The chain crosses the membrane as a helical span at residues 807-827; it reads NNALEWVIYTTSIIFVLPLFL. Residues 828-832 lie on the Extracellular side of the membrane; it reads NIPAY. Residues 833-853 form a helical membrane-spanning segment; it reads MQWQCGAIAIFFYWMNFLLYL. Over 854–876 the chain is Cytoplasmic; it reads QRFENCGIFIVMLEVIFKTLLRS. Cys-859 is modified (cysteine sulfenic acid (-SOH); transient; in hyperoxia). A helical transmembrane segment spans residues 877 to 897; the sequence is TGVFIFLLLAFGLSFYVLLNF. Topologically, residues 898–904 are extracellular; it reads QDAFSTP. Residues 905–925 constitute an intramembrane region (pore-forming); sequence LLSLIQTFSMMLGDINYRDAF. At 926–937 the chain is on the extracellular side; it reads LEPLFRNELAYP. Residues 938–959 traverse the membrane as a helical segment; it reads VLTFGQLIAFTMFVPIVLMNLL. Residues 960 to 1125 lie on the Cytoplasmic side of the membrane; it reads IGLAVGDIAE…THCSISHPDF (166 aa). Positions 1044–1073 form a coiled coil; that stretch reads MEILKQKYRLKDLTSLLEKQHELIKLIIQK. A 1,2-diacyl-sn-glycero-3-phospho-(1D-myo-inositol) is bound at residue 1048–1054; sequence KQKYRLK.

It belongs to the transient receptor (TC 1.A.4) family. In terms of assembly, homotetramer. Interacts with TMEM100. Interacts with EGLN1. Interacts with the scorpion wasabi receptor toxin at the same site that electrophiles but in a non-covalent manner. Post-translationally, TRPA1 activation by electrophiles occurs though covalent modification of specific cysteine residues in the N-terminal cytoplasmic domain. Hydroxylation is required for TRPA1 activity inhibition in normoxia. In hypoxia, the decrease in oxygen concentration diminishes the activity of the hydroxylase EGLN1, thus relieving TRPA1 from inhibition and ultimately leading to channel activation. In terms of processing, oxidation of Cys-634 and Cys-859 in hyperoxia may override the hydroxylase EGLN1-mediated inhibition, causing TRPA1 activation. In terms of tissue distribution, expressed in inner ear (at protein level). Specifically expressed in a subset of nociceptive neurons. Expressed in the same neurons that TRPV1. In contrast, it is not expressed in neurons expressing TRPM8. Expressed in the superior cervical ganglion of vagus nerve. Expressed in the inferior ganglion (nodose ganglion) of vagus nerve. Expressed in dorsal root ganglia neurons.

It localises to the cell membrane. The catalysed reaction is Ca(2+)(in) = Ca(2+)(out). It catalyses the reaction Mg(2+)(in) = Mg(2+)(out). It carries out the reaction Na(+)(in) = Na(+)(out). The enzyme catalyses K(+)(in) = K(+)(out). The catalysed reaction is Zn(2+)(in) = Zn(2+)(out). Its activity is regulated as follows. Electrophilic ligands activate the channel by covalent modification of intracellular cysteines. Cys-622 plays a key role in covalent binding of electrophiles. Extracellular Ca(2+) both potentiates and inactivates TRPA1; a rapid potentiation follows by slow desensitization. Activated by increase in intracellular Ca(2+) concentration. Inhibited by the potent blocker of TRPV channels ruthenium red, A-967079. Activated by icilin, sulfhydryl reactive agent MTSEA, N-methyl maleimide (NMM), and PF-4840154. Also activated by hyperoxia. Activated by intracellular Zn(2+). TRPA1 activation may critically depend on the presence of small intracellular compounds such as polyphosphates. In terms of biological role, ligand-activated Ca(2+)-permeable, nonselective cation channel. Involved in pain detection and possibly also in cold perception, oxygen concentration perception, cough, itch, and inner ear function. Has a relatively high Ca(2+) selectivity, with a preference for divalent over monovalent cations (Ca(2+) &gt; Ba(2+) &gt; Mg(2+) &gt; NH4(+) &gt; Li(+) &gt; K(+)), the influx of cation into the cytoplasm, leads to membrane depolarization. Has a central role in the pain response to endogenous inflammatory mediators, such as bradykinin and to a diverse array of irritants. Activated by a large variety of structurally unrelated electrophilic and non-electrophilic chemical compounds, such as allylthiocyanate (AITC) from mustard oil or wasabi, cinnamaldehyde, diallyl disulfide (DADS) from garlic, and acrolein, an environmental irritant. Electrophilic ligands activate TRPA1 by interacting with critical N-terminal Cys residues in a covalent manner. Non-electrophile agonists bind at distinct sites in the transmembrane domain to promote channel activation. Also acts as an ionotropic cannabinoid receptor by being activated by delta(9)-tetrahydrocannabinol (THC), the psychoactive component of marijuana. May be a component for the mechanosensitive transduction channel of hair cells in inner ear, thereby participating in the perception of sounds. This chain is Transient receptor potential cation channel subfamily A member 1, found in Mus musculus (Mouse).